The primary structure comprises 501 residues: Cytochrome P450 2J5 (501 aa).

Residue Cys-447 participates in heme binding.

Belongs to the cytochrome P450 family. Requires heme as cofactor.

It is found in the endoplasmic reticulum membrane. The protein localises to the microsome membrane. The enzyme catalyses an organic molecule + reduced [NADPH--hemoprotein reductase] + O2 = an alcohol + oxidized [NADPH--hemoprotein reductase] + H2O + H(+). The protein is Cytochrome P450 2J5 (Cyp2j5) of Mus musculus (Mouse).